The sequence spans 122 residues: Large ribosomal subunit protein bL12 (122 aa).

It belongs to the bacterial ribosomal protein bL12 family. In terms of assembly, homodimer. Part of the ribosomal stalk of the 50S ribosomal subunit. Forms a multimeric L10(L12)X complex, where L10 forms an elongated spine to which 2 to 4 L12 dimers bind in a sequential fashion. Binds GTP-bound translation factors.

Forms part of the ribosomal stalk which helps the ribosome interact with GTP-bound translation factors. Is thus essential for accurate translation. This Xylella fastidiosa (strain 9a5c) protein is Large ribosomal subunit protein bL12.